Here is a 422-residue protein sequence, read N- to C-terminus: Serine--tRNA ligase (422 aa).

Residue 229–231 participates in L-serine binding; it reads TAE. 260 to 262 provides a ligand contact to ATP; the sequence is RAE. Residue Glu283 participates in L-serine binding. ATP is bound at residue 347–350; sequence EISS. Ser383 lines the L-serine pocket.

This sequence belongs to the class-II aminoacyl-tRNA synthetase family. Type-1 seryl-tRNA synthetase subfamily. Homodimer. The tRNA molecule binds across the dimer.

The protein localises to the cytoplasm. The catalysed reaction is tRNA(Ser) + L-serine + ATP = L-seryl-tRNA(Ser) + AMP + diphosphate + H(+). It carries out the reaction tRNA(Sec) + L-serine + ATP = L-seryl-tRNA(Sec) + AMP + diphosphate + H(+). Its pathway is aminoacyl-tRNA biosynthesis; selenocysteinyl-tRNA(Sec) biosynthesis; L-seryl-tRNA(Sec) from L-serine and tRNA(Sec): step 1/1. Its function is as follows. Catalyzes the attachment of serine to tRNA(Ser). Is also able to aminoacylate tRNA(Sec) with serine, to form the misacylated tRNA L-seryl-tRNA(Sec), which will be further converted into selenocysteinyl-tRNA(Sec). The protein is Serine--tRNA ligase of Heliobacterium modesticaldum (strain ATCC 51547 / Ice1).